We begin with the raw amino-acid sequence, 371 residues long: MPLSLFRRLLLAVLLLVIIWTLFGPSGLGEELLSLSLASLLPAPASPGPPLALPRLLIPNPQACGGSGPPPFLLILVCTAPEHLNQRNAIRGSWGAIREARGFRVQTLFLLGEPMGQQFADLASESAAQGDVLQASFQDSYRNLTLKTLTGLNWVNKYCPMARYILKTDDDVYVNVPELVSELIQRGGPSEQWQKGKEPQEETTAVHKEHKGQAVPLLYLGRVHWRVRPTRTPESRHHVSEELWPENWGPFPPYASGTGYVLSISAVQLILKVASRAPYLPLEDVFVGVSARRVGLAPTHCVKLAGATHYPLDRCCYGKFLLTSHKVDPWKMQEAWKLVRGLNGRRTEPFCSWLQGFLGTLRCRFIAWLNS.

Topologically, residues 1–4 (MPLS) are cytoplasmic. Residues 5 to 25 (LFRRLLLAVLLLVIIWTLFGP) form a helical; Signal-anchor for type II membrane protein membrane-spanning segment. The Lumenal portion of the chain corresponds to 26-371 (SGLGEELLSL…RCRFIAWLNS (346 aa)). Asparagine 143 carries N-linked (GlcNAc...) asparagine glycosylation. The segment at 187–208 (GGPSEQWQKGKEPQEETTAVHK) is disordered. Basic and acidic residues predominate over residues 194–207 (QKGKEPQEETTAVH).

It belongs to the glycosyltransferase 31 family. As to expression, highly expressed in thymus, spleen, kidney and testis and, to a lesser extent, in brain and liver.

The protein resides in the golgi apparatus membrane. It carries out the reaction a ganglioside GM2 (d18:1(4E)) + UDP-alpha-D-galactose = a ganglioside GM1 (d18:1(4E)) + UDP + H(+). The catalysed reaction is a ganglioside GM2 + UDP-alpha-D-galactose = a ganglioside GM1 + UDP + H(+). The enzyme catalyses a ganglioside GD2 (d18:1(4E)) + UDP-alpha-D-galactose = a ganglioside GD1b (d18:1(4E)) + UDP + H(+). It catalyses the reaction a ganglioside GA2 (d18:1(4E)) + UDP-alpha-D-galactose = a ganglioside GA1 (d18:1(4E)) + UDP + H(+). It participates in protein modification; protein glycosylation. Involved in GM1/GD1B/GA1 ganglioside biosynthesis. In Rattus norvegicus (Rat), this protein is Beta-1,3-galactosyltransferase 4 (B3galt4).